We begin with the raw amino-acid sequence, 709 residues long: DNA ligase (709 aa).

Residues 34-38 (DAEYD), 83-84 (SL), and Glu115 contribute to the NAD(+) site. Residue Lys117 is the N6-AMP-lysine intermediate of the active site. NAD(+) contacts are provided by Arg138, Glu185, Lys301, and Lys325. Residues Cys419, Cys422, Cys437, and Cys443 each coordinate Zn(2+). The BRCT domain maps to 602–691 (RQSDTLAGKT…AEPPPSPPPP (90 aa)). Positions 679 to 709 (GTTAEPPPSPPPPPPETNTDGNQLLLPLDGE) are disordered. Over residues 683–694 (EPPPSPPPPPPE) the composition is skewed to pro residues.

Belongs to the NAD-dependent DNA ligase family. LigA subfamily. Mg(2+) is required as a cofactor. Requires Mn(2+) as cofactor.

It catalyses the reaction NAD(+) + (deoxyribonucleotide)n-3'-hydroxyl + 5'-phospho-(deoxyribonucleotide)m = (deoxyribonucleotide)n+m + AMP + beta-nicotinamide D-nucleotide.. In terms of biological role, DNA ligase that catalyzes the formation of phosphodiester linkages between 5'-phosphoryl and 3'-hydroxyl groups in double-stranded DNA using NAD as a coenzyme and as the energy source for the reaction. It is essential for DNA replication and repair of damaged DNA. The sequence is that of DNA ligase from Chloroflexus aurantiacus (strain ATCC 29364 / DSM 637 / Y-400-fl).